Reading from the N-terminus, the 383-residue chain is Lipoyl synthase, mitochondrial (383 aa).

A mitochondrion-targeting transit peptide spans 1-19; that stretch reads MHASTLTRCMRVAQNARCL. The segment at 69-97 is disordered; that stretch reads DAAPGTKPSRKPNASNRKPKWLKAQPTQG. Residues C116, C121, C127, C147, C151, C154, and S362 each coordinate [4Fe-4S] cluster. The 220-residue stretch at 132–351 folds into the Radical SAM core domain; the sequence is KDGIATATIM…QKVAEQMGFL (220 aa).

The protein belongs to the radical SAM superfamily. Lipoyl synthase family. Requires [4Fe-4S] cluster as cofactor.

Its subcellular location is the mitochondrion. It carries out the reaction [[Fe-S] cluster scaffold protein carrying a second [4Fe-4S](2+) cluster] + N(6)-octanoyl-L-lysyl-[protein] + 2 oxidized [2Fe-2S]-[ferredoxin] + 2 S-adenosyl-L-methionine + 4 H(+) = [[Fe-S] cluster scaffold protein] + N(6)-[(R)-dihydrolipoyl]-L-lysyl-[protein] + 4 Fe(3+) + 2 hydrogen sulfide + 2 5'-deoxyadenosine + 2 L-methionine + 2 reduced [2Fe-2S]-[ferredoxin]. Its pathway is protein modification; protein lipoylation via endogenous pathway; protein N(6)-(lipoyl)lysine from octanoyl-[acyl-carrier-protein]: step 2/2. In terms of biological role, catalyzes the radical-mediated insertion of two sulfur atoms into the C-6 and C-8 positions of the octanoyl moiety bound to the lipoyl domains of lipoate-dependent enzymes, thereby converting the octanoylated domains into lipoylated derivatives. This is Lipoyl synthase, mitochondrial from Phytophthora infestans (strain T30-4) (Potato late blight agent).